Consider the following 523-residue polypeptide: Polypyrimidine tract-binding protein 3 (523 aa).

Positions 1 to 25 (MNNSTSAGVYANGNDNKKFKGDRPP) are disordered. RRM domains are found at residues 30-114 (RVLH…NLPN), 153-229 (LRII…FSKL), and 329-403 (SVLL…LSKH). Lysine 36 participates in a covalent cross-link: Glycyl lysine isopeptide (Lys-Gly) (interchain with G-Cter in SUMO2). Tyrosine 98 is subject to Phosphotyrosine. Threonine 109 is subject to Phosphothreonine. A Glycyl lysine isopeptide (Lys-Gly) (interchain with G-Cter in SUMO2) cross-link involves residue lysine 187. Lysine 394 carries the N6-acetyllysine modification. The interval 406–426 (VQLPREGQEDQGLTKDFSNSP) is disordered. Serine 425 is modified (phosphoserine). The RRM 4 domain occupies 446 to 521 (ATLHLSNIPP…HHLRVSFSKS (76 aa)).

As to quaternary structure, interacts with THBS4 (via the acidic amphipathic C-terminus). Detected specifically in spleen, thymus, lungs, and bone marrow.

Functionally, RNA-binding protein that mediates pre-mRNA alternative splicing regulation. Plays a role in the regulation of cell proliferation, differentiation and migration. Positive regulator of EPO-dependent erythropoiesis. Participates in cell differentiation regulation by repressing tissue-specific exons. Promotes Fas exon 6 skipping. Binds RNA, preferentially to both poly(G) and poly(U). The protein is Polypyrimidine tract-binding protein 3 (Ptbp3) of Rattus norvegicus (Rat).